The following is a 241-amino-acid chain: Ubiquinone biosynthesis O-methyltransferase (241 aa).

4 residues coordinate S-adenosyl-L-methionine: Arg44, Gly63, Asp84, and Met128.

It belongs to the methyltransferase superfamily. UbiG/COQ3 family.

It catalyses the reaction a 3-demethylubiquinol + S-adenosyl-L-methionine = a ubiquinol + S-adenosyl-L-homocysteine + H(+). The catalysed reaction is a 3-(all-trans-polyprenyl)benzene-1,2-diol + S-adenosyl-L-methionine = a 2-methoxy-6-(all-trans-polyprenyl)phenol + S-adenosyl-L-homocysteine + H(+). Its pathway is cofactor biosynthesis; ubiquinone biosynthesis. Its function is as follows. O-methyltransferase that catalyzes the 2 O-methylation steps in the ubiquinone biosynthetic pathway. The chain is Ubiquinone biosynthesis O-methyltransferase from Hydrogenovibrio crunogenus (strain DSM 25203 / XCL-2) (Thiomicrospira crunogena).